Here is a 236-residue protein sequence, read N- to C-terminus: DNA repair protein RecO (236 aa).

It belongs to the RecO family.

Functionally, involved in DNA repair and RecF pathway recombination. In Cellvibrio japonicus (strain Ueda107) (Pseudomonas fluorescens subsp. cellulosa), this protein is DNA repair protein RecO.